Reading from the N-terminus, the 220-residue chain is Urease accessory protein UreF (220 aa).

Belongs to the UreF family. UreD, UreF and UreG form a complex that acts as a GTP-hydrolysis-dependent molecular chaperone, activating the urease apoprotein by helping to assemble the nickel containing metallocenter of UreC. The UreE protein probably delivers the nickel.

Its subcellular location is the cytoplasm. Functionally, required for maturation of urease via the functional incorporation of the urease nickel metallocenter. This chain is Urease accessory protein UreF, found in Jannaschia sp. (strain CCS1).